A 327-amino-acid chain; its full sequence is PDZ and LIM domain protein 1 (327 aa).

Threonine 2 carries the N-acetylthreonine modification. The region spanning 3 to 85 is the PDZ domain; that stretch reads TQQIVLQGPG…NMTLTVSRSE (83 aa). Residues serine 90 and serine 130 each carry the phosphoserine modification. A Phosphotyrosine modification is found at tyrosine 142. The interval 161–184 is disordered; sequence VESKTSASGEEANSRPVVQPHPSG. The LIM zinc-binding domain occupies 256–315; it reads PICDKCGTGIVGVFVKLRDHHRHPECYVCTDCGINLKQKGHFFVEDQIYCEKHARERVTP. Zn(2+) is bound by residues cysteine 258, cysteine 261, histidine 278, cysteine 281, cysteine 284, cysteine 287, cysteine 305, and histidine 308. Residue threonine 314 is modified to Phosphothreonine. The residue at position 319 (tyrosine 319) is a Phosphotyrosine.

In terms of assembly, interacts with ACTN1, ACTN2 and ACTN4. Interacts with PDLIM4. In terms of tissue distribution, expressed in heart, lung, spleen, testis and skeletal muscle.

The protein localises to the cytoplasm. It is found in the cytoskeleton. Its subcellular location is the myofibril. The protein resides in the sarcomere. It localises to the z line. Its function is as follows. Cytoskeletal protein that may act as an adapter that brings other proteins (like kinases) to the cytoskeleton. Involved in assembly, disassembly and directioning of stress fibers in fibroblasts. Required for the localization of ACTN1 and PALLD to stress fibers. Required for cell migration and in maintaining cell polarity of fibroblasts. This Mus musculus (Mouse) protein is PDZ and LIM domain protein 1 (Pdlim1).